The primary structure comprises 240 residues: 1-(5-phosphoribosyl)-5-[(5-phosphoribosylamino)methylideneamino] imidazole-4-carboxamide isomerase (240 aa).

Catalysis depends on Asp-8, which acts as the Proton acceptor. Residue Asp-129 is the Proton donor of the active site.

This sequence belongs to the HisA/HisF family.

Its subcellular location is the cytoplasm. It catalyses the reaction 1-(5-phospho-beta-D-ribosyl)-5-[(5-phospho-beta-D-ribosylamino)methylideneamino]imidazole-4-carboxamide = 5-[(5-phospho-1-deoxy-D-ribulos-1-ylimino)methylamino]-1-(5-phospho-beta-D-ribosyl)imidazole-4-carboxamide. It functions in the pathway amino-acid biosynthesis; L-histidine biosynthesis; L-histidine from 5-phospho-alpha-D-ribose 1-diphosphate: step 4/9. The polypeptide is 1-(5-phosphoribosyl)-5-[(5-phosphoribosylamino)methylideneamino] imidazole-4-carboxamide isomerase (Listeria welshimeri serovar 6b (strain ATCC 35897 / DSM 20650 / CCUG 15529 / CIP 8149 / NCTC 11857 / SLCC 5334 / V8)).